We begin with the raw amino-acid sequence, 408 residues long: MDNSAIFEEFNSKKISQDDLEATITSLNNYFVKLNDLNNQYINLIRQDNIDKIEKQNIRQQQKQVKVEIKKISATTKLFKQNLKLAESLYKKIKLTNNQDDINKAKHEVEIAKSMLLQLKEVINGQGKSIKLKKLSDIAIEINHLSFKYGPEFPNAIDDVSFTINQGEYVTIIGHNGSGKSTISKILIGVLNAQHGEIKIFGNIVNDHNIEQARKFLGIVFQNPDNQFIGSTVEADIAFGLENKRIDPKKMPDIILDSAKKVGMEWALKKEPLNLSGGQKQRVAIASTLALDPDIMIFDEATSMLDPKGKREIKEIMVQLRETRTKTILSITHDMDEILNADKVIVLDHGKLVRVAKPLEIVEDKDFLRNIQLDVPFVGLVREELEKKGIKIASTQNIDELVEQICKK.

Positions 140-374 constitute an ABC transporter domain; it reads IEINHLSFKY…KDFLRNIQLD (235 aa). 174–181 contributes to the ATP binding site; sequence GHNGSGKS.

The protein belongs to the ABC transporter superfamily. Energy-coupling factor EcfA family. In terms of assembly, forms a stable energy-coupling factor (ECF) transporter complex composed of 2 membrane-embedded substrate-binding proteins (S component), 2 ATP-binding proteins (A component) and 2 transmembrane proteins (T component).

The protein resides in the cell membrane. In terms of biological role, ATP-binding (A) component of a common energy-coupling factor (ECF) ABC-transporter complex. Unlike classic ABC transporters this ECF transporter provides the energy necessary to transport a number of different substrates. The polypeptide is Energy-coupling factor transporter ATP-binding protein EcfA1 (Mycoplasma mycoides subsp. mycoides SC (strain CCUG 32753 / NCTC 10114 / PG1)).